The following is a 478-amino-acid chain: DNA-directed RNA polymerase II subunit RPB1 (478 aa).

7 residues coordinate Zn(2+): Cys-68, Cys-71, Cys-78, His-81, Cys-108, Cys-111, and Cys-149. Mg(2+)-binding residues include Asp-474 and Asp-476.

This sequence belongs to the RNA polymerase beta' chain family. Component of the RNA polymerase II (Pol II) complex consisting of 12 subunits. Post-translationally, phosphorylation activates POL II.

The protein resides in the nucleus. It carries out the reaction RNA(n) + a ribonucleoside 5'-triphosphate = RNA(n+1) + diphosphate. In terms of biological role, DNA-dependent RNA polymerase catalyzes the transcription of DNA into RNA using the four ribonucleoside triphosphates as substrates. Largest and catalytic component of RNA polymerase II which synthesizes mRNA precursors and many functional non-coding RNAs. Forms the polymerase active center together with the second largest subunit. Pol II is the central component of the basal RNA polymerase II transcription machinery. It is composed of mobile elements that move relative to each other. RPB1 is part of the core element with the central large cleft, the clamp element that moves to open and close the cleft and the jaws that are thought to grab the incoming DNA template. At the start of transcription, a single-stranded DNA template strand of the promoter is positioned within the central active site cleft of Pol II. A bridging helix emanates from RPB1 and crosses the cleft near the catalytic site and is thought to promote translocation of Pol II by acting as a ratchet that moves the RNA-DNA hybrid through the active site by switching from straight to bent conformations at each step of nucleotide addition. During transcription elongation, Pol II moves on the template as the transcript elongates. Elongation is influenced by the phosphorylation status of the C-terminal domain (CTD) of Pol II largest subunit (RPB1), which serves as a platform for assembly of factors that regulate transcription initiation, elongation, termination and mRNA processing. This is DNA-directed RNA polymerase II subunit RPB1 (RPB1) from Euplotoides octocarinatus (Freshwater ciliate).